A 156-amino-acid chain; its full sequence is Phosphopantetheine adenylyltransferase (156 aa).

A substrate-binding site is contributed by Thr-10. ATP is bound by residues Thr-10–Phe-11 and His-18. Substrate contacts are provided by Lys-42, Leu-74, and Arg-88. ATP contacts are provided by residues Gly-89–Arg-91, Glu-99, and Asn-124–Ser-130.

The protein belongs to the bacterial CoaD family. Homohexamer. Mg(2+) is required as a cofactor.

It is found in the cytoplasm. It catalyses the reaction (R)-4'-phosphopantetheine + ATP + H(+) = 3'-dephospho-CoA + diphosphate. It participates in cofactor biosynthesis; coenzyme A biosynthesis; CoA from (R)-pantothenate: step 4/5. Its function is as follows. Reversibly transfers an adenylyl group from ATP to 4'-phosphopantetheine, yielding dephospho-CoA (dPCoA) and pyrophosphate. In Campylobacter curvus (strain 525.92), this protein is Phosphopantetheine adenylyltransferase.